Consider the following 407-residue polypeptide: Fructose-1,6-bisphosphatase, chloroplastic (407 aa).

A chloroplast-targeting transit peptide spans 1–50; that stretch reads MAAATASSQLIFSKPYSPSRLCPFQLCVFDAKSVLSSSRRKHVNGSGVRC. Residues Glu126, Glu155, Asp176, Leu178, and Asp179 each coordinate Mg(2+). Residue 179–182 participates in substrate binding; sequence DGSS. A disulfide bridge links Cys203 with Cys223. The substrate site is built by Asn287, Tyr319, Tyr337, Tyr339, and Lys349. Glu355 is a binding site for Mg(2+).

Belongs to the FBPase class 1 family. As to quaternary structure, homotetramer. Mg(2+) is required as a cofactor.

The protein localises to the plastid. It localises to the chloroplast stroma. It carries out the reaction beta-D-fructose 1,6-bisphosphate + H2O = beta-D-fructose 6-phosphate + phosphate. It participates in carbohydrate biosynthesis; Calvin cycle. The protein is Fructose-1,6-bisphosphatase, chloroplastic (FBP) of Pisum sativum (Garden pea).